The sequence spans 104 residues: UPF0213 protein plu4503 (104 aa).

One can recognise a GIY-YIG domain in the interval 4-79; that stretch reads NQWVLYLLKT…KQLSKQQKER (76 aa).

This sequence belongs to the UPF0213 family.

This is UPF0213 protein plu4503 from Photorhabdus laumondii subsp. laumondii (strain DSM 15139 / CIP 105565 / TT01) (Photorhabdus luminescens subsp. laumondii).